A 158-amino-acid chain; its full sequence is NADPH-dependent 7-cyano-7-deazaguanine reductase (158 aa).

Catalysis depends on Cys56, which acts as the Thioimide intermediate. Asp63 (proton donor) is an active-site residue. Substrate is bound by residues 78-80 (VES) and 97-98 (HE).

The protein belongs to the GTP cyclohydrolase I family. QueF type 1 subfamily.

It localises to the cytoplasm. The catalysed reaction is 7-aminomethyl-7-carbaguanine + 2 NADP(+) = 7-cyano-7-deazaguanine + 2 NADPH + 3 H(+). The protein operates within tRNA modification; tRNA-queuosine biosynthesis. Its function is as follows. Catalyzes the NADPH-dependent reduction of 7-cyano-7-deazaguanine (preQ0) to 7-aminomethyl-7-deazaguanine (preQ1). In Rhodopseudomonas palustris (strain BisB5), this protein is NADPH-dependent 7-cyano-7-deazaguanine reductase.